Here is a 171-residue protein sequence, read N- to C-terminus: Neuronal vesicle trafficking-associated protein 2 (171 aa).

Over residues 1 to 10 the composition is skewed to polar residues; sequence MVKLNSNPSE. The tract at residues 1-21 is disordered; that stretch reads MVKLNSNPSEKGTKPPSVEDG. The Cytoplasmic segment spans residues 1 to 71; the sequence is MVKLNSNPSE…FRVPKIAEFT (71 aa). The helical; Signal-anchor for type II membrane protein transmembrane segment at 72–92 threads the bilayer; sequence VTILVSLALAFLACIVFLVVY. Over 93 to 171 the chain is Lumenal; it reads KAFTYDHSCP…EPKPPKTQGH (79 aa).

Belongs to the NSG family.

It is found in the membrane. It localises to the golgi apparatus. The protein resides in the trans-Golgi network membrane. The protein localises to the cell projection. Its subcellular location is the dendrite. It is found in the endosome membrane. It localises to the early endosome membrane. The protein resides in the late endosome membrane. The protein localises to the lysosome lumen. Its subcellular location is the cytoplasmic vesicle membrane. It is found in the golgi stack membrane. It localises to the endosome. The protein resides in the multivesicular body membrane. This Homo sapiens (Human) protein is Neuronal vesicle trafficking-associated protein 2.